A 299-amino-acid polypeptide reads, in one-letter code: Tetrahydromethanopterin S-methyltransferase subunit E (299 aa).

6 consecutive transmembrane segments (helical) span residues 57–79 (AISG…AWAL), 95–115 (GVAA…RTVG), 133–153 (IGPI…AAYL), 158–178 (LGNP…VGAI), 237–257 (GLCF…GNII), and 262–282 (VTKT…AAGI).

Belongs to the MtrE family. The complex is composed of 8 subunits; MtrA, MtrB, MtrC, MtrD, MtrE, MtrF, MtrG and MtrH.

It localises to the cell membrane. The catalysed reaction is 5-methyl-5,6,7,8-tetrahydromethanopterin + coenzyme M + 2 Na(+)(in) = 5,6,7,8-tetrahydromethanopterin + methyl-coenzyme M + 2 Na(+)(out). It participates in one-carbon metabolism; methanogenesis from CO(2); methyl-coenzyme M from 5,10-methylene-5,6,7,8-tetrahydromethanopterin: step 2/2. Part of a complex that catalyzes the formation of methyl-coenzyme M and tetrahydromethanopterin from coenzyme M and methyl-tetrahydromethanopterin. This is an energy-conserving, sodium-ion translocating step. This chain is Tetrahydromethanopterin S-methyltransferase subunit E, found in Methanococcus maripaludis (strain C5 / ATCC BAA-1333).